Here is a 1274-residue protein sequence, read N- to C-terminus: DENN domain-containing protein 5B (1274 aa).

Ser2 bears the N-acetylserine mark. The 206-residue stretch at 39 to 244 folds into the uDENN domain; the sequence is DELAGENFDQ…EVPLPPPGRS (206 aa). Phosphoserine occurs at positions 49 and 178. In terms of domain architecture, cDENN spans 263-399; that stretch reads ELPLSDYPLR…VDFIQELSEV (137 aa). Residues 401–581 enclose the dDENN domain; the sequence is VQFGIPPEGS…DNKIMSQWEE (181 aa). An RUN 1 domain is found at 772-932; it reads LEENTLIASL…DYFCFTSVFT (161 aa). Ser822 carries the phosphoserine modification. A helical transmembrane segment spans residues 916-936; the sequence is LLSLNAVDYFCFTSVFTTIMI. Positions 936–1044 constitute a PLAT domain; the sequence is IPYRSVIIPI…DDGSLERILI (109 aa). Residue Thr1062 is modified to Phosphothreonine. Residues Ser1068, Ser1076, and Ser1079 each carry the phosphoserine modification. Residues 1118 to 1267 form the RUN 2 domain; it reads TVLLCGENGL…QDFTIVLEGS (150 aa).

It belongs to the RAB6IP1 family.

The protein localises to the membrane. In terms of biological role, guanine nucleotide exchange factor (GEF) which may activate RAB39A and/or RAB39B. Promotes the exchange of GDP to GTP, converting inactive GDP-bound Rab proteins into their active GTP-bound form. The protein is DENN domain-containing protein 5B (DENND5B) of Homo sapiens (Human).